Reading from the N-terminus, the 340-residue chain is Putative transport protein AF_1800 (340 aa).

7 consecutive transmembrane segments (helical) span residues 7-27 (LVLL…FTPL), 57-77 (SVIA…YGLI), 140-160 (TLLI…LADM), 193-213 (LWFG…PFFL), 225-245 (GLMF…ILPV), 260-280 (FLLI…RPYF), and 290-310 (LVLM…GFFI).

This sequence belongs to the autoinducer-2 exporter (AI-2E) (TC 2.A.86) family.

The protein resides in the cell membrane. This Archaeoglobus fulgidus (strain ATCC 49558 / DSM 4304 / JCM 9628 / NBRC 100126 / VC-16) protein is Putative transport protein AF_1800.